The sequence spans 159 residues: Phosphopantetheine adenylyltransferase (159 aa).

Ser9 lines the substrate pocket. Residues 9-10 (SF) and His17 contribute to the ATP site. Substrate contacts are provided by Lys41, Leu73, and Lys87. Residues 88-90 (GLR), Glu98, and 123-129 (YGYLSSS) each bind ATP.

It belongs to the bacterial CoaD family. Homohexamer. Mg(2+) is required as a cofactor.

The protein resides in the cytoplasm. The catalysed reaction is (R)-4'-phosphopantetheine + ATP + H(+) = 3'-dephospho-CoA + diphosphate. It participates in cofactor biosynthesis; coenzyme A biosynthesis; CoA from (R)-pantothenate: step 4/5. Its function is as follows. Reversibly transfers an adenylyl group from ATP to 4'-phosphopantetheine, yielding dephospho-CoA (dPCoA) and pyrophosphate. The protein is Phosphopantetheine adenylyltransferase of Thermoanaerobacter pseudethanolicus (strain ATCC 33223 / 39E) (Clostridium thermohydrosulfuricum).